The sequence spans 448 residues: D-inositol 3-phosphate glycosyltransferase (448 aa).

The interval 1–21 (MAEQHTGVGRQRGARPWPRPR) is disordered. His29 provides a ligand contact to 1D-myo-inositol 3-phosphate. UDP-N-acetyl-alpha-D-glucosamine-binding positions include 35-36 (QP) and Gly43. Residues 40–45 (DAGGMN), Lys98, Tyr131, Thr155, and Arg175 each bind 1D-myo-inositol 3-phosphate. Residues Arg255, Lys260, and Gln321 each contribute to the UDP-N-acetyl-alpha-D-glucosamine site. Tyr330, Arg331, and Ala333 together coordinate Mg(2+). Glu343 and Glu351 together coordinate UDP-N-acetyl-alpha-D-glucosamine. Mg(2+) is bound at residue Thr357.

Belongs to the glycosyltransferase group 1 family. MshA subfamily. In terms of assembly, homodimer.

The enzyme catalyses 1D-myo-inositol 3-phosphate + UDP-N-acetyl-alpha-D-glucosamine = 1D-myo-inositol 2-acetamido-2-deoxy-alpha-D-glucopyranoside 3-phosphate + UDP + H(+). Its function is as follows. Catalyzes the transfer of a N-acetyl-glucosamine moiety to 1D-myo-inositol 3-phosphate to produce 1D-myo-inositol 2-acetamido-2-deoxy-glucopyranoside 3-phosphate in the mycothiol biosynthesis pathway. The sequence is that of D-inositol 3-phosphate glycosyltransferase from Salinispora arenicola (strain CNS-205).